A 492-amino-acid chain; its full sequence is Catalase (492 aa).

Active-site residues include histidine 65 and asparagine 138. Residue tyrosine 348 coordinates heme.

Belongs to the catalase family. As to quaternary structure, homotetramer. Heme is required as a cofactor.

It is found in the cytoplasm. Its subcellular location is the cytosol. The protein resides in the peroxisome matrix. The catalysed reaction is 2 H2O2 = O2 + 2 H2O. Its function is as follows. Catalyzes the degradation of hydrogen peroxide (H(2)O(2)) generated by peroxisomal oxidases to water and oxygen, thereby protecting cells from the toxic effects of hydrogen peroxide. The protein is Catalase (CATA) of Triticum aestivum (Wheat).